We begin with the raw amino-acid sequence, 142 residues long: Hemoglobin subunit alpha (142 aa).

The Globin domain maps to 2–142; that stretch reads VLSPADKTNV…VSTVLVSKYR (141 aa). Serine 4 carries the post-translational modification Phosphoserine. At lysine 8 the chain carries N6-succinyllysine. Threonine 9 is modified (phosphothreonine). Residue lysine 12 is modified to N6-succinyllysine. At lysine 17 the chain carries N6-acetyllysine; alternate. At lysine 17 the chain carries N6-succinyllysine; alternate. Tyrosine 25 is subject to Phosphotyrosine. Serine 36 carries the post-translational modification Phosphoserine. Lysine 41 bears the N6-succinyllysine mark. Serine 50 is subject to Phosphoserine. Position 59 (histidine 59) interacts with O2. Histidine 88 contributes to the heme b binding site. Residue serine 103 is modified to Phosphoserine. Position 109 is a phosphothreonine (threonine 109). Phosphoserine occurs at positions 125 and 132. Residue threonine 135 is modified to Phosphothreonine. Serine 139 carries the phosphoserine modification.

It belongs to the globin family. Heterotetramer of two alpha chains and two beta chains. Red blood cells.

Its function is as follows. Involved in oxygen transport from the lung to the various peripheral tissues. Hemopressin acts as an antagonist peptide of the cannabinoid receptor CNR1. Hemopressin-binding efficiently blocks cannabinoid receptor CNR1 and subsequent signaling. The polypeptide is Hemoglobin subunit alpha (HBA) (Antrozous pallidus (Pallid bat)).